Here is a 61-residue protein sequence, read N- to C-terminus: Large ribosomal subunit protein uL30 (61 aa).

The protein belongs to the universal ribosomal protein uL30 family. As to quaternary structure, part of the 50S ribosomal subunit.

In Chlorobium phaeobacteroides (strain BS1), this protein is Large ribosomal subunit protein uL30.